Here is a 380-residue protein sequence, read N- to C-terminus: Succinyl-diaminopimelate desuccinylase (380 aa).

Position 70 (His70) interacts with Zn(2+). Residue Asp72 is part of the active site. Asp104 contacts Zn(2+). The active-site Proton acceptor is Glu138. Zn(2+) contacts are provided by Glu139, Glu167, and His353.

The protein belongs to the peptidase M20A family. DapE subfamily. As to quaternary structure, homodimer. The cofactor is Zn(2+). Co(2+) is required as a cofactor.

The catalysed reaction is N-succinyl-(2S,6S)-2,6-diaminopimelate + H2O = (2S,6S)-2,6-diaminopimelate + succinate. It functions in the pathway amino-acid biosynthesis; L-lysine biosynthesis via DAP pathway; LL-2,6-diaminopimelate from (S)-tetrahydrodipicolinate (succinylase route): step 3/3. Catalyzes the hydrolysis of N-succinyl-L,L-diaminopimelic acid (SDAP), forming succinate and LL-2,6-diaminopimelate (DAP), an intermediate involved in the bacterial biosynthesis of lysine and meso-diaminopimelic acid, an essential component of bacterial cell walls. This is Succinyl-diaminopimelate desuccinylase from Ectopseudomonas mendocina (strain ymp) (Pseudomonas mendocina).